We begin with the raw amino-acid sequence, 557 residues long: Formate--tetrahydrofolate ligase (557 aa).

66–73 (TPAGEGKS) contacts ATP.

The protein belongs to the formate--tetrahydrofolate ligase family.

It catalyses the reaction (6S)-5,6,7,8-tetrahydrofolate + formate + ATP = (6R)-10-formyltetrahydrofolate + ADP + phosphate. It functions in the pathway one-carbon metabolism; tetrahydrofolate interconversion. This chain is Formate--tetrahydrofolate ligase, found in Clostridium botulinum (strain Okra / Type B1).